Consider the following 293-residue polypeptide: MVRRQSAPRLEFEAAAIYEYPEHLRPFLSEAPALPGVYIFHSESDTLPLYIGKSVNIRSRVLSHLRTPDEATMLRQARRISWICTAGEMGALLLEARLIKEQQPLFNKRLRRNRQLCSLQLSEQKIEVVSARSVDFSHEPNLFGLFANRRAALQSLQNLADEQKLCYGLLGLEPVSRGRACFRFALKRCAGACCGQETPQAHFLRLQASLERLRVVCWPWKGAIALKESRPQMTQFHIINNWLWLGAVPSLDEAATLVRTPAGFDQDGYKILCKPLMSGQYEIIELHTDCRQS.

The 76-residue stretch at 33–108 folds into the GIY-YIG domain; the sequence is ALPGVYIFHS…IKEQQPLFNK (76 aa).

Incises the DNA at the 3' side of a lesion during nucleotide excision repair. Incises the DNA farther away from the lesion than UvrC. Not able to incise the 5' site of a lesion. When a lesion remains because UvrC is not able to induce the 3' incision, Cho incises the DNA. Then UvrC makes the 5' incision. The combined action of Cho and UvrC broadens the substrate range of nucleotide excision repair. In Salmonella typhimurium (strain LT2 / SGSC1412 / ATCC 700720), this protein is Excinuclease cho (cho).